Consider the following 434-residue polypeptide: Serine/threonine-protein kinase Sgk1-B (434 aa).

A disordered region spans residues 68–94 (ESELLNENSSPPPSHSQQINLGPSSNP). Residues 101 to 358 (FQFLKIIGKG…FMEIKNHIFF (258 aa)) form the Protein kinase domain. ATP contacts are provided by residues 107 to 115 (IGKGSFGKV) and K130. D225 functions as the Proton acceptor in the catalytic mechanism. One can recognise an AGC-kinase C-terminal domain in the interval 359-434 (SPIDWDDLIN…SYAPPMDSYL (76 aa)).

This sequence belongs to the protein kinase superfamily. AGC Ser/Thr protein kinase family.

The protein resides in the cytoplasm. It is found in the nucleus. It localises to the endoplasmic reticulum. The catalysed reaction is L-seryl-[protein] + ATP = O-phospho-L-seryl-[protein] + ADP + H(+). It carries out the reaction L-threonyl-[protein] + ATP = O-phospho-L-threonyl-[protein] + ADP + H(+). Protein kinase that may play an important role in cellular stress response. Plays an important role in activating certain potassium, sodium, and chloride channels, suggesting an involvement in the regulation of processes such as cell survival, neuronal excitability and renal sodium excretion. This chain is Serine/threonine-protein kinase Sgk1-B (sgk1-b), found in Xenopus laevis (African clawed frog).